The chain runs to 426 residues: Serine hydroxymethyltransferase (426 aa).

(6S)-5,6,7,8-tetrahydrofolate contacts are provided by residues Leu-115 and Gly-119–Ile-121. Lys-225 carries the post-translational modification N6-(pyridoxal phosphate)lysine.

Belongs to the SHMT family. In terms of assembly, homodimer. Pyridoxal 5'-phosphate is required as a cofactor.

The protein resides in the cytoplasm. The protein operates within amino-acid biosynthesis; glycine biosynthesis; glycine from L-serine: step 1/1. Functionally, catalyzes the reversible interconversion of serine and glycine with a modified folate serving as the one-carbon carrier. Also exhibits a pteridine-independent aldolase activity toward beta-hydroxyamino acids, producing glycine and aldehydes, via a retro-aldol mechanism. This Thermoplasma volcanium (strain ATCC 51530 / DSM 4299 / JCM 9571 / NBRC 15438 / GSS1) protein is Serine hydroxymethyltransferase.